A 681-amino-acid polypeptide reads, in one-letter code: DNA ligase (681 aa).

NAD(+) contacts are provided by residues 35-39, 84-85, and glutamate 121; these read DAEYD and SI. Catalysis depends on lysine 123, which acts as the N6-AMP-lysine intermediate. Residues arginine 144, glutamate 180, lysine 300, and lysine 324 each contribute to the NAD(+) site. Zn(2+) is bound by residues cysteine 418, cysteine 421, cysteine 436, and cysteine 442. Positions 601-681 constitute a BRCT domain; the sequence is AADGPASGKT…GLRRLLEQPA (81 aa).

Belongs to the NAD-dependent DNA ligase family. LigA subfamily. Mg(2+) serves as cofactor. The cofactor is Mn(2+).

The catalysed reaction is NAD(+) + (deoxyribonucleotide)n-3'-hydroxyl + 5'-phospho-(deoxyribonucleotide)m = (deoxyribonucleotide)n+m + AMP + beta-nicotinamide D-nucleotide.. Its function is as follows. DNA ligase that catalyzes the formation of phosphodiester linkages between 5'-phosphoryl and 3'-hydroxyl groups in double-stranded DNA using NAD as a coenzyme and as the energy source for the reaction. It is essential for DNA replication and repair of damaged DNA. This is DNA ligase from Aromatoleum aromaticum (strain DSM 19018 / LMG 30748 / EbN1) (Azoarcus sp. (strain EbN1)).